A 372-amino-acid polypeptide reads, in one-letter code: Neutral protease 2 homolog MGYG_06241 (372 aa).

The first 19 residues, 1–19, serve as a signal peptide directing secretion; sequence MQFFTAIAAISALVAPALA. Residues 20–188 constitute a propeptide that is removed on maturation; it reads LPTQELPQAP…THFAGTLNRR (169 aa). Intrachain disulfides connect cysteine 195–cysteine 264 and cysteine 271–cysteine 289. Histidine 313 provides a ligand contact to Zn(2+). Glutamate 314 is a catalytic residue. 2 residues coordinate Zn(2+): histidine 317 and aspartate 328.

It belongs to the peptidase M35 family. It depends on Zn(2+) as a cofactor.

Its subcellular location is the secreted. The catalysed reaction is Preferential cleavage of bonds with hydrophobic residues in P1'. Also 3-Asn-|-Gln-4 and 8-Gly-|-Ser-9 bonds in insulin B chain.. In terms of biological role, secreted metalloproteinase that allows assimilation of proteinaceous substrates. Shows high activities on basic nuclear substrates such as histone and protamine. May be involved in virulence. The polypeptide is Neutral protease 2 homolog MGYG_06241 (Arthroderma gypseum (strain ATCC MYA-4604 / CBS 118893) (Microsporum gypseum)).